The chain runs to 428 residues: Glutamyl-tRNA reductase (428 aa).

Substrate is bound by residues 49–52 (TCNR), Ser-107, 112–114 (EPQ), and Gln-118. The Nucleophile role is filled by Cys-50. Residue 187-192 (GAGETI) participates in NADP(+) binding.

It belongs to the glutamyl-tRNA reductase family. As to quaternary structure, homodimer.

The enzyme catalyses (S)-4-amino-5-oxopentanoate + tRNA(Glu) + NADP(+) = L-glutamyl-tRNA(Glu) + NADPH + H(+). It functions in the pathway porphyrin-containing compound metabolism; protoporphyrin-IX biosynthesis; 5-aminolevulinate from L-glutamyl-tRNA(Glu): step 1/2. Functionally, catalyzes the NADPH-dependent reduction of glutamyl-tRNA(Glu) to glutamate 1-semialdehyde (GSA). The protein is Glutamyl-tRNA reductase of Pseudomonas fluorescens (strain Pf0-1).